The chain runs to 602 residues: Elongation factor 4 (602 aa).

The tr-type G domain occupies Lys-8–Ser-189. Residues Asp-20–Thr-25 and Asn-136–Asp-139 contribute to the GTP site.

The protein belongs to the TRAFAC class translation factor GTPase superfamily. Classic translation factor GTPase family. LepA subfamily.

Its subcellular location is the cell inner membrane. It carries out the reaction GTP + H2O = GDP + phosphate + H(+). Required for accurate and efficient protein synthesis under certain stress conditions. May act as a fidelity factor of the translation reaction, by catalyzing a one-codon backward translocation of tRNAs on improperly translocated ribosomes. Back-translocation proceeds from a post-translocation (POST) complex to a pre-translocation (PRE) complex, thus giving elongation factor G a second chance to translocate the tRNAs correctly. Binds to ribosomes in a GTP-dependent manner. This Helicobacter pylori (strain HPAG1) protein is Elongation factor 4.